Reading from the N-terminus, the 153-residue chain is Endoribonuclease YbeY (153 aa).

3 residues coordinate Zn(2+): His-118, His-122, and His-128.

The protein belongs to the endoribonuclease YbeY family. Zn(2+) is required as a cofactor.

The protein resides in the cytoplasm. Single strand-specific metallo-endoribonuclease involved in late-stage 70S ribosome quality control and in maturation of the 3' terminus of the 16S rRNA. The chain is Endoribonuclease YbeY from Staphylococcus carnosus (strain TM300).